A 155-amino-acid chain; its full sequence is Transcriptional repressor NrdR (155 aa).

Positions 1 to 24 are disordered; it reads MRCPYCGHEDSQVKDSRPTEDGAA. A zinc finger lies at 3–34; it reads CPYCGHEDSQVKDSRPTEDGAAIRRRRQCEDC. Positions 7–24 are enriched in basic and acidic residues; the sequence is GHEDSQVKDSRPTEDGAA. Positions 49–139 constitute an ATP-cone domain; it reads VVVIKAGGTR…VYRDFTEARD (91 aa).

It belongs to the NrdR family. It depends on Zn(2+) as a cofactor.

In terms of biological role, negatively regulates transcription of bacterial ribonucleotide reductase nrd genes and operons by binding to NrdR-boxes. In Sphingopyxis alaskensis (strain DSM 13593 / LMG 18877 / RB2256) (Sphingomonas alaskensis), this protein is Transcriptional repressor NrdR.